The chain runs to 370 residues: Histidinol-phosphate aminotransferase (370 aa).

Lys-230 is subject to N6-(pyridoxal phosphate)lysine.

The protein belongs to the class-II pyridoxal-phosphate-dependent aminotransferase family. Histidinol-phosphate aminotransferase subfamily. In terms of assembly, homodimer. Pyridoxal 5'-phosphate is required as a cofactor.

The enzyme catalyses L-histidinol phosphate + 2-oxoglutarate = 3-(imidazol-4-yl)-2-oxopropyl phosphate + L-glutamate. It participates in amino-acid biosynthesis; L-histidine biosynthesis; L-histidine from 5-phospho-alpha-D-ribose 1-diphosphate: step 7/9. The sequence is that of Histidinol-phosphate aminotransferase from Leptospira interrogans serogroup Icterohaemorrhagiae serovar Lai (strain 56601).